A 335-amino-acid chain; its full sequence is Pro-cathepsin H (335 aa).

The N-terminal stretch at 1-22 (MWAVLSLLCAGAWLLGPPACGA) is a signal peptide. Residues 23–97 (SNLAVSSFEK…DEIRHKYLWS (75 aa)) constitute a propeptide that is removed on maturation. N72 and N101 each carry an N-linked (GlcNAc...) asparagine glycan. Disulfide bonds link C102–C327, C138–C181, C172–C214, and C272–C322. Positions 107 to 115 (GNYLRGTGP) are excised as a propeptide. Residue C141 is part of the active site. N-linked (GlcNAc...) asparagine glycosylation is present at N230. Active-site residues include H281 and N301.

This sequence belongs to the peptidase C1 family. Composed of cathepsin H and mini chain; disulfide-linked. Cathepsin H may be split into heavy and light chain. All chains are held together by disulfide bonds.

The protein resides in the lysosome. The enzyme catalyses Hydrolysis of proteins, acting as an aminopeptidase (notably, cleaving Arg-|-Xaa bonds) as well as an endopeptidase.. Its function is as follows. Important for the overall degradation of proteins in lysosomes. In Sus scrofa (Pig), this protein is Pro-cathepsin H (CTSH).